A 106-amino-acid chain; its full sequence is Neisseria hypothetical transcription factor (106 aa).

Residues 26 to 80 enclose the HTH cro/C1-type domain; it reads MRLFRVNKGWSQEELARQCGLDRTYVSAVERKRWNIALSNIEKMAAALGVAAYQL. The H-T-H motif DNA-binding region spans 37–56; that stretch reads QEELARQCGLDRTYVSAVER.

Homodimer. Can interact with the dimeric form of the DNA mimic protein DMP19 with 1:1 stoichiometry.

Its subcellular location is the cytoplasm. With respect to regulation, repressor activity is inhibited in the presence of the DNA mimic protein DMP19, which interacts with NHTF and prevents binding of NHTF to its DNA-binding sites. In terms of biological role, transcriptional regulator probably involved in the response to nitrogen levels. Down-regulates its own expression as well as the expression of the downstream gene, glnD, which encodes the [Protein-PII] uridylyltransferase, a key enzyme in the nitrogen regulation system. Acts by binding to a specific palindromic DNA sequence (5'-TGTNANTNACA-3') in its 5'-untranslated region. The sequence is that of Neisseria hypothetical transcription factor from Neisseria meningitidis serogroup B (strain ATCC BAA-335 / MC58).